Consider the following 255-residue polypeptide: MLFDTHAHLNAEQYDTDLEEVIERAKAEKVERIVVVGFDRPTITRAMEMIEEYDFIYAAIGWHPVDAIDMTEEDLAWIKELSAHEKVVAIGEMGLDYHWDKSPKDIQKEVFRNQIALAKEVNLPIIIHNRDATEDVVTILKEEGAEAVGGIMHCFTGSAEVARECMKMNFYLSFGGPVTFKNAKKPKEVVKEIPNDRLLIETDCPFLTPHPFRGKRNEPSYVKYVAEQIAELKEMTFEEIASITTENAKRLFRIN.

A divalent metal cation contacts are provided by His-6, His-8, Glu-92, His-128, His-153, and Asp-203.

The protein belongs to the metallo-dependent hydrolases superfamily. TatD-type hydrolase family. It depends on a divalent metal cation as a cofactor.

This is an uncharacterized protein from Bacillus subtilis (strain 168).